A 476-amino-acid polypeptide reads, in one-letter code: Aspartyl/glutamyl-tRNA(Asn/Gln) amidotransferase subunit B (476 aa).

Belongs to the GatB/GatE family. GatB subfamily. Heterotrimer of A, B and C subunits.

The catalysed reaction is L-glutamyl-tRNA(Gln) + L-glutamine + ATP + H2O = L-glutaminyl-tRNA(Gln) + L-glutamate + ADP + phosphate + H(+). The enzyme catalyses L-aspartyl-tRNA(Asn) + L-glutamine + ATP + H2O = L-asparaginyl-tRNA(Asn) + L-glutamate + ADP + phosphate + 2 H(+). Functionally, allows the formation of correctly charged Asn-tRNA(Asn) or Gln-tRNA(Gln) through the transamidation of misacylated Asp-tRNA(Asn) or Glu-tRNA(Gln) in organisms which lack either or both of asparaginyl-tRNA or glutaminyl-tRNA synthetases. The reaction takes place in the presence of glutamine and ATP through an activated phospho-Asp-tRNA(Asn) or phospho-Glu-tRNA(Gln). This chain is Aspartyl/glutamyl-tRNA(Asn/Gln) amidotransferase subunit B, found in Clostridium botulinum (strain 657 / Type Ba4).